A 346-amino-acid chain; its full sequence is Methionine import ATP-binding protein MetN 1 (346 aa).

The 240-residue stretch at 2–241 folds into the ABC transporter domain; the sequence is IELKNVSKVF…PQHVTTKKFV (240 aa). Position 38–45 (38–45) interacts with ATP; that stretch reads GYSGAGKS.

This sequence belongs to the ABC transporter superfamily. Methionine importer (TC 3.A.1.24) family. The complex is composed of two ATP-binding proteins (MetN), two transmembrane proteins (MetI) and a solute-binding protein (MetQ).

The protein resides in the cell membrane. The enzyme catalyses L-methionine(out) + ATP + H2O = L-methionine(in) + ADP + phosphate + H(+). It catalyses the reaction D-methionine(out) + ATP + H2O = D-methionine(in) + ADP + phosphate + H(+). Its function is as follows. Part of the ABC transporter complex MetNIQ involved in methionine import. Responsible for energy coupling to the transport system. This Bacillus cereus (strain ATCC 10987 / NRS 248) protein is Methionine import ATP-binding protein MetN 1.